A 374-amino-acid polypeptide reads, in one-letter code: MPHKVSLSRLKLTDFRNYAAAALDLDGRHAVLTGDNGAGKTNLMEAVSLLSPGRGLRRAAYGDITRVGAAGGFSIFAALDGMEGEVEIGTGIETGEETTARRLRINGTQAKTADELTDHLRLLWLTPAMDGLFTGASSDRRRFLDRLVLSLDPAHGRRASDFERAMRSRNKLLDEGRFDPSWLAGIEEQMASLGIAMALARQEMLGLLTRLIEETRETSPFPSASLQLSGFMDGQFTRPSVDLEDEYAAMLSESRYRDAGAGRTLDGPHRADLIVHHREKAMEAERCSTGEQKALLVGLVLAHARLVGNLTGHAPILLLDEIAAHLDEGRRAALFDLIDGLGGQAFMTGTDRAMFSALGDRAQVFTVADGKIFE.

34 to 41 serves as a coordination point for ATP; that stretch reads GDNGAGKT.

This sequence belongs to the RecF family.

It is found in the cytoplasm. Functionally, the RecF protein is involved in DNA metabolism; it is required for DNA replication and normal SOS inducibility. RecF binds preferentially to single-stranded, linear DNA. It also seems to bind ATP. The protein is DNA replication and repair protein RecF of Rhizobium leguminosarum bv. trifolii (strain WSM2304).